Reading from the N-terminus, the 412-residue chain is Histidinol dehydrogenase (412 aa).

Residues Tyr-118, Gln-176, and Asn-199 each contribute to the NAD(+) site. Substrate is bound by residues Thr-222, Gln-244, and His-247. Zn(2+) is bound by residues Gln-244 and His-247. Residues Glu-311 and His-312 each act as proton acceptor in the active site. Residues His-312, Asp-345, Glu-399, and His-404 each coordinate substrate. Asp-345 lines the Zn(2+) pocket. Residue His-404 coordinates Zn(2+).

Belongs to the histidinol dehydrogenase family. Requires Zn(2+) as cofactor.

The catalysed reaction is L-histidinol + 2 NAD(+) + H2O = L-histidine + 2 NADH + 3 H(+). It participates in amino-acid biosynthesis; L-histidine biosynthesis; L-histidine from 5-phospho-alpha-D-ribose 1-diphosphate: step 9/9. In terms of biological role, catalyzes the sequential NAD-dependent oxidations of L-histidinol to L-histidinaldehyde and then to L-histidine. The protein is Histidinol dehydrogenase of Thermus thermophilus (strain ATCC BAA-163 / DSM 7039 / HB27).